The primary structure comprises 62 residues: Large ribosomal subunit protein uL29 (62 aa).

Belongs to the universal ribosomal protein uL29 family.

The chain is Large ribosomal subunit protein uL29 from Enterococcus faecalis (strain ATCC 700802 / V583).